Reading from the N-terminus, the 385-residue chain is Probable tRNA sulfurtransferase (385 aa).

In terms of domain architecture, THUMP spans 57–160 (DGVIERVKKV…RGNAYVFTDK (104 aa)). ATP-binding positions include 180-181 (ML), 205-206 (YY), arginine 262, glycine 284, and glutamine 293.

Belongs to the ThiI family.

Its subcellular location is the cytoplasm. It catalyses the reaction [ThiI sulfur-carrier protein]-S-sulfanyl-L-cysteine + a uridine in tRNA + 2 reduced [2Fe-2S]-[ferredoxin] + ATP + H(+) = [ThiI sulfur-carrier protein]-L-cysteine + a 4-thiouridine in tRNA + 2 oxidized [2Fe-2S]-[ferredoxin] + AMP + diphosphate. It carries out the reaction [ThiS sulfur-carrier protein]-C-terminal Gly-Gly-AMP + S-sulfanyl-L-cysteinyl-[cysteine desulfurase] + AH2 = [ThiS sulfur-carrier protein]-C-terminal-Gly-aminoethanethioate + L-cysteinyl-[cysteine desulfurase] + A + AMP + 2 H(+). It functions in the pathway cofactor biosynthesis; thiamine diphosphate biosynthesis. Catalyzes the ATP-dependent transfer of a sulfur to tRNA to produce 4-thiouridine in position 8 of tRNAs, which functions as a near-UV photosensor. Also catalyzes the transfer of sulfur to the sulfur carrier protein ThiS, forming ThiS-thiocarboxylate. This is a step in the synthesis of thiazole, in the thiamine biosynthesis pathway. The sulfur is donated as persulfide by IscS. In Clostridium perfringens (strain SM101 / Type A), this protein is Probable tRNA sulfurtransferase.